A 344-amino-acid chain; its full sequence is MDDSMDYPDRDGDDLDQFQGTARSQVVQNQPHDEEVNLSESESFAGADEPPAAPRDASLIESHDMDEGPAAPARTLSPTGYEAGKHAPGGIANSDEAPPGAYNAQEYKHLNVGEDVRELFSYIGRYKPQTVELDTRIKPFIPDYIPAVGGIDEFIKVPRPDTKPDYLGLKVLDEPAAKQSDPTVLTLQLRQLSKEAPGAKADMVGRLEHTDENKAKKIQQWIASINDIHKAKPAATVNYSKRMPEIEALMQEWPPEVETFLKTMHMPSGDVELDIKTYARLVCTLLDIPVYDDPVESLHVLFTLYLEFKNNPIFRQHMEMENKLDGMSGGGGGMMGGGADVLGL.

Positions 1–16 (MDDSMDYPDRDGDDLD) are enriched in acidic residues. Positions 1 to 100 (MDDSMDYPDR…IANSDEAPPG (100 aa)) are disordered. The span at 18 to 30 (FQGTARSQVVQNQ) shows a compositional bias: polar residues.

The protein belongs to the IFT46 family. In terms of assembly, component of the IFT complex B, the core composed of IFT25, IFT27, IFT46, IFT52, IFT74, IFT81 and IFT88 as well as associated subunits IFT20, IFT57, IFT80 and IFT172. Interacts with IFT25, IFT52, IFT70, IFT88 and DAW1.

It is found in the cytoplasm. The protein localises to the cytoskeleton. Its subcellular location is the cilium basal body. The protein resides in the cell projection. It localises to the cilium. Functionally, forms part of a complex involved in intraflagellar transport (IFT), the bi-directional movement of particles required for the assembly, maintenance and functioning of primary cilia. Plays a role in maintaining IFT complex B stability. The polypeptide is Intraflagellar transport protein 46 (Chlamydomonas reinhardtii (Chlamydomonas smithii)).